Consider the following 269-residue polypeptide: MAQRRAAAESARHQRLLEGKAQAEGGSARTSLLILVSIFTIAAFLMFLVYKNFPQLSEEEGKCIKIPRDMDDAKALGKVLSKYKDTFYVQVLVAYFATYVFLQTFAIPGSIFLSILSGFLYPFPLALFLVCLCSGLGASFCYMLSYLVGRPVVYKYLTEKAVKWSEQVERHREHLINYIIFLRITPFLPNWFINITSPVINVPLKVFFIGTFLGVAPPSFVAIKAGTTLYQLTTAGEAVSWNSLFVLMILAILSILPALFQKKLKQKFE.

Helical transmembrane passes span 30 to 50 (TSLLILVSIFTIAAFLMFLVY), 87 to 107 (FYVQVLVAYFATYVFLQTFAI), 125 to 147 (LALFLVCLCSGLGASFCYMLSYL), 175 to 195 (LINYIIFLRITPFLPNWFINI), 203 to 223 (PLKVFFIGTFLGVAPPSFVAI), and 240 to 260 (SWNSLFVLMILAILSILPALF). Residues 118 to 229 (GFLYPFPLAL…FVAIKAGTTL (112 aa)) form a VTT domain; required for its function in autophagy region.

This sequence belongs to the TMEM41 family.

The protein localises to the endoplasmic reticulum membrane. The protein resides in the endomembrane system. The enzyme catalyses a 1,2-diacyl-sn-glycero-3-phospho-L-serine(in) = a 1,2-diacyl-sn-glycero-3-phospho-L-serine(out). It carries out the reaction cholesterol(in) = cholesterol(out). The catalysed reaction is a 1,2-diacyl-sn-glycero-3-phosphocholine(in) = a 1,2-diacyl-sn-glycero-3-phosphocholine(out). It catalyses the reaction a 1,2-diacyl-sn-glycero-3-phosphoethanolamine(in) = a 1,2-diacyl-sn-glycero-3-phosphoethanolamine(out). Phospholipid scramblase involved in lipid homeostasis and membrane dynamics processes. Has phospholipid scramblase activity toward cholesterol and phosphatidylserine, as well as phosphatidylethanolamine and phosphatidylcholine. Required for autophagosome formation: participates in early stages of autophagosome biogenesis at the endoplasmic reticulum (ER) membrane by reequilibrating the leaflets of the ER as lipids are extracted by ATG2 (ATG2A or ATG2B) to mediate autophagosome assembly. In addition to autophagy, involved in other processes in which phospholipid scramblase activity is required. Required for normal motor neuron development. This Gallus gallus (Chicken) protein is Transmembrane protein 41B.